The following is a 96-amino-acid chain: Co-chaperonin GroES (96 aa).

Belongs to the GroES chaperonin family. In terms of assembly, heptamer of 7 subunits arranged in a ring. Interacts with the chaperonin GroEL.

It localises to the cytoplasm. Its function is as follows. Together with the chaperonin GroEL, plays an essential role in assisting protein folding. The GroEL-GroES system forms a nano-cage that allows encapsulation of the non-native substrate proteins and provides a physical environment optimized to promote and accelerate protein folding. GroES binds to the apical surface of the GroEL ring, thereby capping the opening of the GroEL channel. This is Co-chaperonin GroES from Hydrogenovibrio crunogenus (strain DSM 25203 / XCL-2) (Thiomicrospira crunogena).